Here is a 463-residue protein sequence, read N- to C-terminus: tRNA (guanine(10)-N(2))-methyltransferase TRMT11 (463 aa).

Ala-2 carries the post-translational modification N-acetylalanine.

Belongs to the class I-like SAM-binding methyltransferase superfamily. TRM11 methyltransferase family. In terms of assembly, part of the heterodimeric TRMT11-TRM112 methyltransferase complex; this complex forms an active tRNA methyltransferase, where TRMT112 acts as an activator of the catalytic subunit TRMT11.

The protein localises to the cytoplasm. The catalysed reaction is guanosine(10) in tRNA + S-adenosyl-L-methionine = N(2)-methylguanosine(10) in tRNA + S-adenosyl-L-homocysteine + H(+). Its function is as follows. Catalytic subunit of the TRMT11-TRM112 methyltransferase complex, that specifically mediates the S-adenosyl-L-methionine-dependent N(2)-methylation of guanosine nucleotide at position 10 (m2G10) in tRNAs. This is one of the major tRNA (guanine-N(2))-methyltransferases. The sequence is that of tRNA (guanine(10)-N(2))-methyltransferase TRMT11 from Homo sapiens (Human).